Here is a 205-residue protein sequence, read N- to C-terminus: Ras-related protein Rab-1A (205 aa).

Residues 18-26, 36-43, 66-70, 124-127, and 154-156 contribute to the GTP site; these read GDSGVGKSC, YTESYIST, DTAGQ, NKSD, and SAK. The Effector region signature appears at 40-48; that stretch reads YISTIGVDF. The segment covering 183-198 has biased composition (polar residues); it reads SDSKPSVKINSSTPVS. Residues 183–205 are disordered; the sequence is SDSKPSVKINSSTPVSANKGGCC. S-geranylgeranyl cysteine attachment occurs at residues cysteine 204 and cysteine 205.

This sequence belongs to the small GTPase superfamily. Rab family.

Its subcellular location is the golgi apparatus. The protein resides in the endoplasmic reticulum. In terms of biological role, probably required for transit of protein from the ER through Golgi compartment. The polypeptide is Ras-related protein Rab-1A (RAB1A) (Lymnaea stagnalis (Great pond snail)).